A 393-amino-acid chain; its full sequence is Protein TsgA (393 aa).

The next 12 helical transmembrane spans lie at 11–31 (WISF…GMVM), 51–71 (FLNA…EIIP), 78–98 (FGFI…SLAL), 101–121 (AAMF…TFLI), 134–154 (LLFT…VAAF), 162–182 (WYWV…LTFG), 206–226 (IGVL…LGFI), 245–265 (ALVS…SFIL), 273–293 (ILTV…TGTQ), 298–318 (WFIL…ITLG), 332–352 (FILT…GPIV), and 361–381 (LLTA…LGFV).

Belongs to the major facilitator superfamily. TsgA family.

It is found in the cell inner membrane. This Salmonella schwarzengrund (strain CVM19633) protein is Protein TsgA.